A 333-amino-acid chain; its full sequence is 5-formaminoimidazole-4-carboxamide-1-(beta)-D-ribofuranosyl 5'-monophosphate synthetase (333 aa).

5-amino-1-(5-phospho-beta-D-ribosyl)imidazole-4-carboxamide-binding residues include His9 and Ser73. The region spanning 94–324 is the ATP-grasp domain; it reads RNLFEWEANQ…ISREIKLAIN (231 aa). ATP is bound by residues 124 to 184 and Glu206; that span reads PEDI…VPMY. A 5-amino-1-(5-phospho-beta-D-ribosyl)imidazole-4-carboxamide-binding site is contributed by Asn230. Residues Glu269 and Glu282 each contribute to the Mg(2+) site.

It belongs to the phosphohexose mutase family. Mg(2+) serves as cofactor. Mn(2+) is required as a cofactor.

It catalyses the reaction 5-amino-1-(5-phospho-beta-D-ribosyl)imidazole-4-carboxamide + formate + ATP = 5-formamido-1-(5-phospho-D-ribosyl)imidazole-4-carboxamide + ADP + phosphate. Its pathway is purine metabolism; IMP biosynthesis via de novo pathway; 5-formamido-1-(5-phospho-D-ribosyl)imidazole-4-carboxamide from 5-amino-1-(5-phospho-D-ribosyl)imidazole-4-carboxamide (formate route): step 1/1. Catalyzes the ATP- and formate-dependent formylation of 5-aminoimidazole-4-carboxamide-1-beta-d-ribofuranosyl 5'-monophosphate (AICAR) to 5-formaminoimidazole-4-carboxamide-1-beta-d-ribofuranosyl 5'-monophosphate (FAICAR) in the absence of folates. This chain is 5-formaminoimidazole-4-carboxamide-1-(beta)-D-ribofuranosyl 5'-monophosphate synthetase, found in Sulfurisphaera tokodaii (strain DSM 16993 / JCM 10545 / NBRC 100140 / 7) (Sulfolobus tokodaii).